The primary structure comprises 665 residues: GRB2-associated-binding protein 2 (665 aa).

S2 carries the post-translational modification Phosphoserine. The region spanning 8-119 is the PH domain; it reads DVVCTGWLRK…WVQSICQICG (112 aa). Residues 131 to 184 are disordered; it reads RNLSSASHGPRSSPAEFSSSQHLLRERKSSAPSHSSQPTLFTFEPPVSSHMQPT. 10 positions are modified to phosphoserine: S135, S142, S143, S149, S150, S160, S165, S211, S220, and S261. A compositionally biased stretch (polar residues) spans 160 to 170; sequence SAPSHSSQPTL. Position 262 is a phosphothreonine (T262). Phosphotyrosine is present on Y263. A Phosphothreonine modification is found at T275. 2 positions are modified to phosphoserine: S278 and S282. Residue T284 is modified to Phosphothreonine. Position 290 is a phosphotyrosine (Y290). T328 carries the phosphothreonine modification. Positions 338–396 are disordered; sequence VATPGDSAIAPPPRPPKPSQAETSQWGSIQQRPPISENSRSVAATIPRRNTLPAMDNSR. The SH3-binding motif lies at 348-355; it reads PPPRPPKP. A compositionally biased stretch (polar residues) spans 357 to 379; it reads QAETSQWGSIQQRPPISENSRSV. Position 365 is a phosphoserine (S365). Residues T382 and T388 each carry the phosphothreonine modification. Phosphoserine is present on S402. T405 carries the post-translational modification Phosphothreonine. Positions 408–445 are disordered; that stretch reads YPARGSGESASWSAEPPGKTAVGRSNSASSDDNYVPMN. The residue at position 420 (S420) is a Phosphoserine. Residues 430–439 are compositionally biased toward polar residues; it reads GRSNSASSDD. Y441 carries the phosphotyrosine modification. S469 is subject to Phosphoserine. The segment at 491-517 is disordered; that stretch reads PSRGSEIQPPPVNRNLKPDRKAKPTPL. Positions 499-508 match the SH3-binding motif; the sequence is PPPVNRNLKP. Phosphoserine is present on S532. 2 stretches are compositionally biased toward polar residues: residues 548-566 and 578-600; these read SSSQ…STDS and NPVS…STGS. 2 disordered regions span residues 548-632 and 646-665; these read SSSQ…KVDY and TMQE…GAKL. Phosphoserine is present on S612. Y632 bears the Phosphotyrosine mark. The segment covering 646 to 659 has biased composition (polar residues); sequence TMQEWTDVRQSSEP.

It belongs to the GAB family. Part of a complex composed of EEIG1, TNFRSF11A/RANK, PLCG2, GAB2, TEC and BTK; complex formation increases in the presence of TNFSF11/RANKL. Interacts with HCK. Interacts with SHC1; may mediate interaction with receptors. Interacts with SYK. Interacts with PI-3 kinase. Interacts with GRB2 (via SH3 2 domain). Interacts (phosphorylated) with PTPN11. Interacts with TNFRSF11A (via cytoplasmic domain). Interacts (phosphorylated) with 14-3-3 family proteins SFN, YWHAB, YWHAE, YWHAG, YWHAH, YWHAQ and YWHAZ; prevents interaction with GRB2 and attenuates GAB2 signaling. In terms of processing, phosphorylated upon EGF stimulation. Phosphorylated on tyrosine residues by HCK upon IL6 signaling. Phosphorylated on tyrosine residue(s) by the thrombopoietin receptor (TPOR), stem cell factor receptor (SCFR), and T-cell and B-cell antigen receptors, gp130, IL-2R and IL-3R. Phosphorylated upon stimulation of TNFRSF11A/RANK by TNFSF11/RANKL. Dephosphorylated by PTPN11. In terms of tissue distribution, ubiquitously expressed.

It localises to the cytoplasm. It is found in the cell membrane. Its subcellular location is the membrane raft. Functionally, adapter protein which acts downstream of several membrane receptors including cytokine, antigen, hormone, cell matrix and growth factor receptors to regulate multiple signaling pathways. Regulates osteoclast differentiation mediating the TNFRSF11A/RANK signaling. In allergic response, it plays a role in mast cells activation and degranulation through PI-3-kinase regulation. Also involved in the regulation of cell proliferation and hematopoiesis. This chain is GRB2-associated-binding protein 2 (Gab2), found in Mus musculus (Mouse).